The following is a 40-amino-acid chain: Trypsin inhibitor (40 aa).

In terms of assembly, monomer.

It carries out the reaction Preferential cleavage: Arg-|-Xaa, Lys-|-Xaa.. Functionally, inhibits trypsin but not chymotrypsin, papain or porcine pancreatic alpha-amylase. Has insecticidal activity against A.aegypti. Functions by inhibiting the A.aegypti midgut proteases to reduce the survival of larva and adults. The protein is Trypsin inhibitor of Cassia leiandra (Marimari).